Consider the following 481-residue polypeptide: Aspartyl/glutamyl-tRNA(Asn/Gln) amidotransferase subunit B (481 aa).

The protein belongs to the GatB/GatE family. GatB subfamily. As to quaternary structure, heterotrimer of A, B and C subunits.

The enzyme catalyses L-glutamyl-tRNA(Gln) + L-glutamine + ATP + H2O = L-glutaminyl-tRNA(Gln) + L-glutamate + ADP + phosphate + H(+). The catalysed reaction is L-aspartyl-tRNA(Asn) + L-glutamine + ATP + H2O = L-asparaginyl-tRNA(Asn) + L-glutamate + ADP + phosphate + 2 H(+). In terms of biological role, allows the formation of correctly charged Asn-tRNA(Asn) or Gln-tRNA(Gln) through the transamidation of misacylated Asp-tRNA(Asn) or Glu-tRNA(Gln) in organisms which lack either or both of asparaginyl-tRNA or glutaminyl-tRNA synthetases. The reaction takes place in the presence of glutamine and ATP through an activated phospho-Asp-tRNA(Asn) or phospho-Glu-tRNA(Gln). The protein is Aspartyl/glutamyl-tRNA(Asn/Gln) amidotransferase subunit B of Ehrlichia chaffeensis (strain ATCC CRL-10679 / Arkansas).